The following is a 238-amino-acid chain: Orotidine 5'-phosphate decarboxylase (238 aa).

Residues Asp-18, Lys-40, 67 to 76 (DMKLLDIDNT), Thr-122, Arg-183, Gln-192, and Arg-213 each bind substrate. Lys-69 (proton donor) is an active-site residue.

It belongs to the OMP decarboxylase family. Type 1 subfamily. As to quaternary structure, homodimer.

It carries out the reaction orotidine 5'-phosphate + H(+) = UMP + CO2. Its pathway is pyrimidine metabolism; UMP biosynthesis via de novo pathway; UMP from orotate: step 2/2. Its function is as follows. Catalyzes the decarboxylation of orotidine 5'-monophosphate (OMP) to uridine 5'-monophosphate (UMP). This is Orotidine 5'-phosphate decarboxylase from Brucella canis (strain ATCC 23365 / NCTC 10854 / RM-666).